Here is a 631-residue protein sequence, read N- to C-terminus: Clathrin interactor 1 (631 aa).

An ENTH domain is found at 24–157; that stretch reads NVVMNYSEIE…QDDDRLREER (134 aa). An a 1,2-diacyl-sn-glycero-3-phospho-(1D-myo-inositol-4,5-bisphosphate)-binding site is contributed by arginine 37. An interaction with VTI1B region spans residues 60-62; it reads FMY. Arginine 75 serves as a coordination point for a 1,2-diacyl-sn-glycero-3-phospho-(1D-myo-inositol-4,5-bisphosphate). 2 interaction with VTI1B regions span residues 102 to 104 and 150 to 161; these read SER and DDRLREERKKAK. Residues serine 171, serine 174, serine 213, serine 218, serine 235, serine 253, and serine 307 each carry the phosphoserine modification. Residues 227–339 are disordered; sequence FRRKDREDSP…SSGDLVDLFD (113 aa). Basic and acidic residues predominate over residues 230–247; the sequence is KDREDSPERCSDSDEEKK. Residues 308 to 318 show a composition bias toward polar residues; sequence PDQNASTHTPQ. Threonine 316 carries the post-translational modification Phosphothreonine. Positions 319–331 are enriched in low complexity; it reads SSAKPSVPSSKSS. Phosphoserine is present on residues serine 320 and serine 630.

The protein belongs to the epsin family. As to quaternary structure, binds clathrin heavy chain and AP-2. Interacts with VTI1B. Interacts with GGA2 (via GAE domain). Interacts with AP1G1 (via GAE domain). Interacts with AP1G2 (via GAE domain).

It localises to the cytoplasm. It is found in the perinuclear region. Its subcellular location is the membrane. The protein localises to the cytoplasmic vesicle. The protein resides in the clathrin-coated vesicle. In terms of biological role, binds to membranes enriched in phosphatidylinositol 4,5-bisphosphate (PtdIns(4,5)P2). May have a role in transport via clathrin-coated vesicles from the trans-Golgi network to endosomes. Stimulates clathrin assembly. In Mus musculus (Mouse), this protein is Clathrin interactor 1 (Clint1).